An 828-amino-acid polypeptide reads, in one-letter code: ADP-ribosylation factor GTPase-activating protein AGD1 (828 aa).

The 225-residue stretch at 1–225 (MHFAKLDDSP…INQVLAYAHQ (225 aa)) folds into the BAR domain. The stretch at 225–255 (QSRECANYEMASLNERMQEYQRQVDRETRNS) forms a coiled coil. Residues 247–268 (QVDRETRNSCVSPTGDGMRHNS) form a disordered region. Residues 288–425 (QTIRQGYLSK…WIEKITGVIA (138 aa)) form the PH domain. Serine 441 carries the phosphoserine modification. An Arf-GAP domain is found at 498-643 (EKPIDVLTRV…IFVRKAIDSQ (146 aa)). The C4-type zinc finger occupies 513-536 (CADCGAPEPDWASLNLGVLICIEC). Over residues 590–600 (TSSASRSSGTP) the composition is skewed to low complexity. The disordered stretch occupies residues 590–611 (TSSASRSSGTPKSDRPRKLLVR). ANK repeat units lie at residues 735–764 (NDCSLLHLACLSADIGMVELLLQYGAKINA) and 768–797 (KGRTPLHHCIISRRYAIARLLLMRGGDPNA).

In terms of tissue distribution, expressed in roots, but not in hypocotyls or cotyledons. Low levels detected in leaf and shoot apical meristems and in siliques.

The protein resides in the endosome. Its function is as follows. Probable GTPase-activating protein. Regulator of membrane trafficking. Required for maintaining a straight growth of root hairs. This chain is ADP-ribosylation factor GTPase-activating protein AGD1 (AGD1), found in Arabidopsis thaliana (Mouse-ear cress).